The sequence spans 344 residues: UDP-N-acetylenolpyruvoylglucosamine reductase (344 aa).

The region spanning 17–187 is the FAD-binding PCMH-type domain; sequence VDYACSELIS…TGVGIKLAKK (171 aa). Arg163 is an active-site residue. The active-site Proton donor is Ser233. Residue Glu329 is part of the active site.

The protein belongs to the MurB family. The cofactor is FAD.

The protein localises to the cytoplasm. The catalysed reaction is UDP-N-acetyl-alpha-D-muramate + NADP(+) = UDP-N-acetyl-3-O-(1-carboxyvinyl)-alpha-D-glucosamine + NADPH + H(+). It participates in cell wall biogenesis; peptidoglycan biosynthesis. Functionally, cell wall formation. In Shewanella sediminis (strain HAW-EB3), this protein is UDP-N-acetylenolpyruvoylglucosamine reductase.